A 284-amino-acid polypeptide reads, in one-letter code: S-formylglutathione hydrolase (284 aa).

Alanine 2 carries the post-translational modification N-acetylalanine. 2 residues coordinate substrate: asparagine 63 and lysine 67. Active-site charge relay system residues include serine 152, aspartate 229, and histidine 262.

Belongs to the esterase D family. Homodimer.

It carries out the reaction S-formylglutathione + H2O = formate + glutathione + H(+). Activity toward p-nitrophenyl acetate inhibited by N-ethylmaleimide, 10-(fluoroethoxyphosphinyl)-N-(biotinamidopentyl)decanamide (FP-biotin), iodoacetamide, CuCl(2) and ZnSO(4), but not by phenylmethylsulfonyl fluoride, EDTA, Mg(2+), Mn(2+), Ca(2+) or paraoxon, an organo-phosphate inhibitor of serine hydrolases. Serine hydrolase which catalyzes the hydrolysis of S-formylglutathione to glutathione and formic acid. Also hydrolyzes S-acetylglutathione and a range of carboxyesters in vitro. Involved in the detoxification of formaldehyde. The sequence is that of S-formylglutathione hydrolase (SFGH) from Arabidopsis thaliana (Mouse-ear cress).